We begin with the raw amino-acid sequence, 255 residues long: ATP-dependent L-serine kinase (255 aa).

E36 is an active-site residue. V74 provides a ligand contact to O-phospho-L-serine. D75 contacts Mg(2+). Positions 76, 77, 78, 108, 234, 236, and 238 each coordinate O-phospho-L-serine.

The protein belongs to the SerK family. It depends on Mg(2+) as a cofactor.

The catalysed reaction is L-serine + ATP = O-phospho-L-serine + ADP + H(+). In terms of biological role, free serine kinase that uses ATP to phosphorylate L-serine to yield O-phospho-L-serine and ADP. The sequence is that of ATP-dependent L-serine kinase from Desulfurococcus mucosus (strain ATCC 35584 / DSM 2162 / JCM 9187 / O7/1).